Here is a 798-residue protein sequence, read N- to C-terminus: Probable serine/threonine-protein kinase DDB_G0276461 (798 aa).

The region spanning 54–324 (VTEVKLVAEG…DLLNYLNEIR (271 aa)) is the Protein kinase domain. ATP-binding positions include 60–68 (VAEGGFGFV) and lysine 82. Residue aspartate 185 is the Proton acceptor of the active site. Disordered regions lie at residues 330 to 538 (GLQT…NGNF), 553 to 645 (TNGS…SYNN), and 659 to 798 (SSAS…FGIL). Low complexity-rich tracts occupy residues 335–406 (SSNN…NTPN), 429–490 (SNSN…NNNN), 506–538 (PSPSNSNSNVIINNTNSSGKNNQNKSNSGNGNF), 557–603 (TNFE…INNS), 611–642 (SSGSLPQSRQSSFNSTPQQQQQQFNSSTNSGS), and 659–678 (SSASISSSGGVSNNSDNSWN). Positions 679–697 (VTLTPSQSNKNSTGNLKPL) are enriched in polar residues. Residues 698 to 716 (NNNNNNNNNNNNRFANNTN) are compositionally biased toward low complexity. Polar residues predominate over residues 717 to 769 (SSRDYSFDFSSPNTSNNNDFGSFVQPSSSSSLNTTHFSKPNYNVNLNQTTSMT). The segment covering 770–790 (NNYNNNNYNNNNNSNNNNNNS) has biased composition (low complexity).

This sequence belongs to the protein kinase superfamily. Ser/Thr protein kinase family.

The enzyme catalyses L-seryl-[protein] + ATP = O-phospho-L-seryl-[protein] + ADP + H(+). The catalysed reaction is L-threonyl-[protein] + ATP = O-phospho-L-threonyl-[protein] + ADP + H(+). The protein is Probable serine/threonine-protein kinase DDB_G0276461 of Dictyostelium discoideum (Social amoeba).